The following is a 129-amino-acid chain: MANLNQIQKEVSEILSDQKSMKSDIKAILELLGSQNPTKESLEAVAAKIVNDLTKLINDCPCNKEILEALGNQPKEQLIEQPKEKGKGLNLGKYSYPNYGVGNEELGSSGNPKALTWPFKAPAGWPNQF.

Coiled-coil stretches lie at residues 1–31 (MANL…ILEL) and 38–59 (TKES…LIND). Residues 122 to 129 (PAGWPNQF) are capsid binding.

The protein belongs to the caulimovirus ORF III family. As to quaternary structure, homotetramer, through coiled-coil domain. Homotrimer when interacts with icosehadral capsid. Interacts with capsid protein, and with Movement protein.

It is found in the virion. The protein localises to the host cell junction. Its subcellular location is the host plasmodesma. Functionally, plays a role in virus cell-to-cell and plant-to-plant transmission. Interacts with virion icosahedral capsid and movement protein, thereby facilitating virion cell-to-cell transmission through plasmodesmata opened by viral movement protein. Also interacts with aphid transmission factor, attaching the virion to aphid stylet when the animal feeds on an virus infected plant. Aphid saliva may later detach the virion, inducing release of infectious particles when the animal feeds on a new plant. In Arabidopsis thaliana (Mouse-ear cress), this protein is Virion-associated protein.